Consider the following 644-residue polypeptide: Phosphatidylinositol polyphosphate 5-phosphatase type IV (644 aa).

Residues 1–193 (MPSKAENLRP…RLPSLLPPRP (193 aa)) are disordered. 8 repeat units span residues 10 to 13 (PSEP), 15 to 18 (PQPP), 28 to 31 (PGAP), 39 to 42 (PPDV), 55 to 58 (PATP), 69 to 71 (PIA), 72 to 74 (PRP), and 75 to 78 (PARP). Positions 10-242 (PSEPAPQPPE…SLGPGRPRSP (233 aa)) are 13 X 4 AA repeats of P-X-X-P. Residues 78-90 (PRLERALSLDDKG) are compositionally biased toward basic and acidic residues. Position 99 is a phosphoserine (serine 99). Polar residues predominate over residues 107-118 (NGTSPSRGSVQS). The stretch at 121–124 (PGAP) is repeat 9. Residues 152–163 (GSPSSGGNPLSG) show a composition bias toward low complexity. 4 repeat units span residues 169–172 (PNLP), 183–185 (PRL), 190–193 (PPRP), and 236–239 (PGRP). 2 positions are modified to phosphoserine: serine 241 and serine 256. Cysteine 641 is subject to Cysteine methyl ester. The S-farnesyl cysteine moiety is linked to residue cysteine 641. Positions 642–644 (SVS) are cleaved as a propeptide — removed in mature form.

It belongs to the inositol polyphosphate 5-phosphatase family. In terms of assembly, interacts (when prenylated) with PDE6D; this is important for normal location in cilia.

It is found in the cytoplasm. The protein localises to the cytoskeleton. The protein resides in the cilium axoneme. It localises to the golgi apparatus. Its subcellular location is the golgi stack membrane. It is found in the cell membrane. The protein localises to the cell projection. The protein resides in the ruffle. It localises to the nucleus. The catalysed reaction is a 1,2-diacyl-sn-glycero-3-phospho-(1D-myo-inositol-4,5-bisphosphate) + H2O = a 1,2-diacyl-sn-glycero-3-phospho-(1D-myo-inositol 4-phosphate) + phosphate. It carries out the reaction a 1,2-diacyl-sn-glycero-3-phospho-(1D-myo-inositol-3,4,5-trisphosphate) + H2O = a 1,2-diacyl-sn-glycero-3-phospho-(1D-myo-inositol-3,4-bisphosphate) + phosphate. The enzyme catalyses a 1,2-diacyl-sn-glycero-3-phospho-(1D-myo-inositol-3,5-bisphosphate) + H2O = a 1,2-diacyl-sn-glycero-3-phospho-(1D-myo-inositol-3-phosphate) + phosphate. Its function is as follows. Phosphatidylinositol (PtdIns) phosphatase that specifically hydrolyzes the 5-phosphate of phosphatidylinositol-3,4,5-trisphosphate (PtdIns(3,4,5)P3), phosphatidylinositol 4,5-bisphosphate(PtdIns(4,5)P2) and phosphatidylinositol 3,5-bisphosphate (PtdIns(3,5)P2). Specific for lipid substrates, inactive towards water soluble inositol phosphates. Plays an essential role in the primary cilium by controlling ciliary growth and phosphoinositide 3-kinase (PI3K) signaling and stability. The polypeptide is Phosphatidylinositol polyphosphate 5-phosphatase type IV (INPP5E) (Pan troglodytes (Chimpanzee)).